The sequence spans 227 residues: Urease accessory protein UreF (227 aa).

Belongs to the UreF family. In terms of assembly, ureD, UreF and UreG form a complex that acts as a GTP-hydrolysis-dependent molecular chaperone, activating the urease apoprotein by helping to assemble the nickel containing metallocenter of UreC. The UreE protein probably delivers the nickel.

It is found in the cytoplasm. Its function is as follows. Required for maturation of urease via the functional incorporation of the urease nickel metallocenter. The sequence is that of Urease accessory protein UreF from Shewanella halifaxensis (strain HAW-EB4).